The primary structure comprises 315 residues: Aspartate carbamoyltransferase catalytic subunit (315 aa).

Carbamoyl phosphate-binding residues include R55 and T56. K83 provides a ligand contact to L-aspartate. 3 residues coordinate carbamoyl phosphate: R105, H138, and Q141. Positions 171 and 225 each coordinate L-aspartate. G266 and P267 together coordinate carbamoyl phosphate.

The protein belongs to the aspartate/ornithine carbamoyltransferase superfamily. ATCase family. In terms of assembly, heterododecamer (2C3:3R2) of six catalytic PyrB chains organized as two trimers (C3), and six regulatory PyrI chains organized as three dimers (R2).

It carries out the reaction carbamoyl phosphate + L-aspartate = N-carbamoyl-L-aspartate + phosphate + H(+). It functions in the pathway pyrimidine metabolism; UMP biosynthesis via de novo pathway; (S)-dihydroorotate from bicarbonate: step 2/3. In terms of biological role, catalyzes the condensation of carbamoyl phosphate and aspartate to form carbamoyl aspartate and inorganic phosphate, the committed step in the de novo pyrimidine nucleotide biosynthesis pathway. The protein is Aspartate carbamoyltransferase catalytic subunit of Mycolicibacterium gilvum (strain PYR-GCK) (Mycobacterium gilvum (strain PYR-GCK)).